The chain runs to 351 residues: UPF0104 membrane protein MTH_887 (351 aa).

Transmembrane regions (helical) follow at residues 20–40 (IVLS…FAGF), 51–71 (SPYF…LWTL), 137–157 (VFEF…IMTW), 165–185 (IVVS…VYAG), 244–264 (FVIG…RLYV), 275–295 (AVPL…PILP), 304–324 (ILVG…AASV), and 328–348 (IASY…YGKQ).

Belongs to the UPF0104 family.

Its subcellular location is the cell membrane. In Methanothermobacter thermautotrophicus (strain ATCC 29096 / DSM 1053 / JCM 10044 / NBRC 100330 / Delta H) (Methanobacterium thermoautotrophicum), this protein is UPF0104 membrane protein MTH_887.